A 946-amino-acid polypeptide reads, in one-letter code: Phosphatidylinositol 4,5-bisphosphate 5-phosphatase INP51 (946 aa).

In terms of domain architecture, SAC spans 151 to 480 (LKKLFSDGTF…YYWLDRTYTK (330 aa)). Disordered regions lie at residues 872–902 (SDSI…SDLK) and 927–946 (PKRD…FIER). A compositionally biased stretch (acidic residues) spans 936 to 946 (ENEDEPLFIER).

The protein belongs to the synaptojanin family. In the central section; belongs to the inositol 1,4,5-trisphosphate 5-phosphatase family. Interacts with IRS4 and TAX4.

The protein resides in the cytoplasm. Its subcellular location is the cytoskeleton. The protein localises to the actin patch. It carries out the reaction a 1,2-diacyl-sn-glycero-3-phospho-(1D-myo-inositol-4,5-bisphosphate) + H2O = a 1,2-diacyl-sn-glycero-3-phospho-(1D-myo-inositol 4-phosphate) + phosphate. IRS4 and TAX4 are both positive regulator of INP51 activity and phosphatidylinositol 4,5-bisphosphate turnover. Its function is as follows. Controls the cellular levels and subcellular distribution of phosphatidylinositol 4,5-bisphosphate (PtdIns(4,5)P2). Does not utilize phosphatidylinositol 3,5-bisphosphate (PtdIns(3,5)P2), nor phosphatidylinositol 3-phosphate (PtdIns(3)P) and phosphatidylinositol 4-phosphate (PtdIns(4)P). Plays an essential role in a TGN (trans Golgi network)-to-early endosome pathway. Involved in endocytosis and acts as a negative regulator of the Slm pathway which modulates polarized actin assembly and growth. The protein is Phosphatidylinositol 4,5-bisphosphate 5-phosphatase INP51 (INP51) of Saccharomyces cerevisiae (strain ATCC 204508 / S288c) (Baker's yeast).